The primary structure comprises 282 residues: Protein N-terminal and lysine N-methyltransferase efm7 (282 aa).

Over residues 1–13 (MSKPEEVVNHVPE) the composition is skewed to basic and acidic residues. The interval 1–32 (MSKPEEVVNHVPEDEGSDIEAGGLFEDPPDFY) is disordered. Residues tryptophan 67, 93–95 (GAA), aspartate 115, tryptophan 152, and alanine 179 contribute to the S-adenosyl-L-methionine site.

It belongs to the class I-like SAM-binding methyltransferase superfamily. EFM7 family.

Its subcellular location is the cytoplasm. In terms of biological role, S-adenosyl-L-methionine-dependent protein methyltransferase that trimethylates the N-terminal glycine 'Gly-2' of elongation factor 1-alpha, before also catalyzing the mono- and dimethylation of 'Lys-3'. The polypeptide is Protein N-terminal and lysine N-methyltransferase efm7 (nnt-1) (Neurospora crassa (strain ATCC 24698 / 74-OR23-1A / CBS 708.71 / DSM 1257 / FGSC 987)).